A 63-amino-acid chain; its full sequence is SLASKPCCDSCLCTRSIPPQCRCTDIGETCHSACKSCICTRSFPPQCRCSDITHFCYKPCTSS.

Disulfide bonds link Cys-7–Cys-60, Cys-8–Cys-23, Cys-11–Cys-56, Cys-13–Cys-21, Cys-30–Cys-37, Cys-34–Cys-49, and Cys-39–Cys-47.

In terms of assembly, monomer.

Inhibits trypsin stoichiometrically at the molar ratio of 1:2, with a dissociation constant of 4.2 nM. Does not inhibit chymotrypsin. In Lupinus albus (White lupine), this protein is Bowman-Birk type proteinase inhibitor.